We begin with the raw amino-acid sequence, 207 residues long: Small ribosomal subunit protein uS4 (207 aa).

The segment at aspartate 30–aspartate 51 is disordered. In terms of domain architecture, S4 RNA-binding spans serine 97–alanine 157.

Belongs to the universal ribosomal protein uS4 family. As to quaternary structure, part of the 30S ribosomal subunit. Contacts protein S5. The interaction surface between S4 and S5 is involved in control of translational fidelity.

Its function is as follows. One of the primary rRNA binding proteins, it binds directly to 16S rRNA where it nucleates assembly of the body of the 30S subunit. In terms of biological role, with S5 and S12 plays an important role in translational accuracy. This Verminephrobacter eiseniae (strain EF01-2) protein is Small ribosomal subunit protein uS4.